Consider the following 215-residue polypeptide: L-fuculose phosphate aldolase (215 aa).

Substrate contacts are provided by residues 28–29 (GN), 43–44 (TG), and 71–72 (SS). Residue glutamate 73 is the Proton donor/acceptor of the active site. Glutamate 73, histidine 92, histidine 94, and histidine 155 together coordinate Zn(2+).

This sequence belongs to the aldolase class II family. AraD/FucA subfamily. Homotetramer. Zn(2+) serves as cofactor.

The catalysed reaction is L-fuculose 1-phosphate = (S)-lactaldehyde + dihydroxyacetone phosphate. Its pathway is carbohydrate degradation; L-fucose degradation; L-lactaldehyde and glycerone phosphate from L-fucose: step 3/3. With respect to regulation, inhibited by phosphoglycolohydroxamate (PGH). Its function is as follows. Involved in the degradation of L-fucose and D-arabinose. Catalyzes the reversible cleavage of L-fuculose 1-phosphate (Fuc1P) to yield dihydroxyacetone phosphate (DHAP) and L-lactaldehyde. Also able to catalyze the reversible cleavage of D-ribulose 1-phosphate, but FucA has a higher affinity for L-fuculose 1-phosphate and L-lactaldehyde than for D-ribulose 1-phosphate and glycolaldehyde, respectively. FucA possesses a high specificity for the dihydroxyacetone phosphate (DHAP), but accepts a great variety of different aldehydes and has a strong preference for L-configurated alpha-hydroxy aldehydes. FucA generates a vicinal diol unit having the absolute (3R,4R)-cis configuration (D-erythro). The protein is L-fuculose phosphate aldolase of Escherichia coli (strain K12).